Reading from the N-terminus, the 578-residue chain is MAGDESPTAAELRNQVRYLEAEVAALRRRLLEHPADGRSLESRLSETQASLASVTAQNERLAETLREAREKIIALKEEVDRLAQPPSGFGTFLGRNDDDTLDVFTGGRKLRVAASPSVDLDALKLGQELMLNEALNVVEACDFEVVGDVVMLKELLADGERALVIAQADEERVVRLASPLLDQALRAGDSLLLEPRSGYVYEKIPKSEVEELVLEEVPDIDYTQIGGLFGQIEQIRDAVEMPYLHKDLFLEHELKPPKGVLLYGPPGCGKTLIAKAVANSLAKKVAEKTGVEGRSFFLNIKGPELLNKYVGETERHIRLVFQRAREKASEGMPVIVFFDEMDSLFRTRGSGVSSDVENTIVPQLLSEIDGVEGLENVIVIGASNREDMIDPAILRPGRLDVKIKIERPDAEAARDIFSKYLTTTLPLHADDVNEFGGDRRECVNGMIQRTVERMYTEADENRFLEVTYANGDKEVLYFKDFNSGAMIQNIVDRAKKMAIKAFLDDNQKGLRVQHLLQACVDEFKENEDLPNTTNPDDWARISGKKGERIVYIRTLISGKQGTEPGRSIDTATNTGQYL.

A coiled-coil region spans residues 8–84 (TAAELRNQVR…LKEEVDRLAQ (77 aa)). An ATP-binding site is contributed by 267-272 (GCGKTL). The segment at 577–578 (YL) is docks into pockets in the proteasome alpha-ring.

This sequence belongs to the AAA ATPase family. As to quaternary structure, homohexamer. Assembles into a hexameric ring structure that caps the 20S proteasome core. Strongly interacts with the prokaryotic ubiquitin-like protein Pup through a hydrophobic interface; the interacting region of ARC lies in its N-terminal coiled-coil domain. There is one Pup binding site per ARC hexamer ring. Upon ATP-binding, the C-terminus of ARC interacts with the alpha-rings of the proteasome core, possibly by binding to the intersubunit pockets.

It participates in protein degradation; proteasomal Pup-dependent pathway. ATPase which is responsible for recognizing, binding, unfolding and translocation of pupylated proteins into the bacterial 20S proteasome core particle. May be essential for opening the gate of the 20S proteasome via an interaction with its C-terminus, thereby allowing substrate entry and access to the site of proteolysis. Thus, the C-termini of the proteasomal ATPase may function like a 'key in a lock' to induce gate opening and therefore regulate proteolysis. This chain is Proteasome-associated ATPase, found in Kribbella flavida (strain DSM 17836 / JCM 10339 / NBRC 14399).